Consider the following 510-residue polypeptide: Amidophosphoribosyltransferase (510 aa).

Residue cysteine 2 is the Nucleophile of the active site. The region spanning 2-239 is the Glutamine amidotransferase type-2 domain; the sequence is CGILGIALAD…PGEAVIIPKD (238 aa). Mg(2+) is bound by residues aspartate 373 and aspartate 374.

This sequence in the C-terminal section; belongs to the purine/pyrimidine phosphoribosyltransferase family. The cofactor is Mg(2+).

The catalysed reaction is 5-phospho-beta-D-ribosylamine + L-glutamate + diphosphate = 5-phospho-alpha-D-ribose 1-diphosphate + L-glutamine + H2O. Its pathway is purine metabolism; IMP biosynthesis via de novo pathway; N(1)-(5-phospho-D-ribosyl)glycinamide from 5-phospho-alpha-D-ribose 1-diphosphate: step 1/2. This is Amidophosphoribosyltransferase (ADE4) from Lachancea kluyveri (Yeast).